We begin with the raw amino-acid sequence, 281 residues long: Probable superoxide dismutase [Fe] (281 aa).

The Fe cation site is built by H104, H152, D236, and H240.

It belongs to the iron/manganese superoxide dismutase family. Fe cation serves as cofactor.

It carries out the reaction 2 superoxide + 2 H(+) = H2O2 + O2. Its function is as follows. Destroys superoxide anion radicals which are normally produced within the cells and which are toxic to biological systems. This chain is Probable superoxide dismutase [Fe] (sodF), found in Bacillus subtilis (strain 168).